The sequence spans 150 residues: Small ribosomal subunit protein uS11x (150 aa).

This sequence belongs to the universal ribosomal protein uS11 family.

The protein resides in the cytoplasm. This chain is Small ribosomal subunit protein uS11x (RPS14C), found in Arabidopsis thaliana (Mouse-ear cress).